The chain runs to 1490 residues: WD repeat-containing protein 7 (1490 aa).

WD repeat units follow at residues 17–56 (APTH…QINP), 62–104 (GHTA…CIEF), 156–199 (ISPD…SDMQ), 324–366 (LICP…DKQG), 404–443 (NEPL…IVQL), 462–507 (GHRN…MKHI), and 558–597 (RHLF…LDRC). Disordered stretches follow at residues 761 to 783 (DEEE…YRSS) and 911 to 945 (GDHM…IVQG). Positions 768–782 (IMRQRREESDPEYRS) are enriched in basic and acidic residues. Serine 935 is modified (phosphoserine). Over residues 936–945 (PPTSSNIVQG) the composition is skewed to polar residues. WD repeat units follow at residues 1351–1390 (PAIC…CQTI) and 1392–1432 (GHKG…LGSI). Phosphoserine is present on serine 1456.

This Homo sapiens (Human) protein is WD repeat-containing protein 7 (WDR7).